Here is a 184-residue protein sequence, read N- to C-terminus: Protein GrpE (184 aa).

Residues 1–32 (MEEQKQTPSTPTPDTAAEAAVNAATAAPETAG) are disordered. Over residues 12 to 32 (TPDTAAEAAVNAATAAPETAG) the composition is skewed to low complexity.

Belongs to the GrpE family. In terms of assembly, homodimer.

It is found in the cytoplasm. Functionally, participates actively in the response to hyperosmotic and heat shock by preventing the aggregation of stress-denatured proteins, in association with DnaK and GrpE. It is the nucleotide exchange factor for DnaK and may function as a thermosensor. Unfolded proteins bind initially to DnaJ; upon interaction with the DnaJ-bound protein, DnaK hydrolyzes its bound ATP, resulting in the formation of a stable complex. GrpE releases ADP from DnaK; ATP binding to DnaK triggers the release of the substrate protein, thus completing the reaction cycle. Several rounds of ATP-dependent interactions between DnaJ, DnaK and GrpE are required for fully efficient folding. The sequence is that of Protein GrpE from Cupriavidus pinatubonensis (strain JMP 134 / LMG 1197) (Cupriavidus necator (strain JMP 134)).